Consider the following 506-residue polypeptide: Lysine--tRNA ligase (506 aa).

2 residues coordinate Mg(2+): glutamate 416 and glutamate 423.

It belongs to the class-II aminoacyl-tRNA synthetase family. Homodimer. It depends on Mg(2+) as a cofactor.

Its subcellular location is the cytoplasm. It catalyses the reaction tRNA(Lys) + L-lysine + ATP = L-lysyl-tRNA(Lys) + AMP + diphosphate. This is Lysine--tRNA ligase from Xylella fastidiosa (strain M12).